The primary structure comprises 110 residues: Glutaredoxin-1 (110 aa).

Positions 7-110 (IKHVKDLIAE…EELLEPILAN (104 aa)) constitute a Glutaredoxin domain. Lysine 11 is covalently cross-linked (Glycyl lysine isopeptide (Lys-Gly) (interchain with G-Cter in ubiquitin)). Glutathione contacts are provided by residues 24–29 (KTYCPY), glutamine 63, valine 75, and 88–89 (ND). The residue at position 27 (cysteine 27) is an S-glutathionyl cysteine; alternate. The cysteines at positions 27 and 30 are disulfide-linked.

The protein belongs to the glutaredoxin family.

Its subcellular location is the cytoplasm. The protein localises to the nucleus. The catalysed reaction is 2 glutathione + H2O2 = glutathione disulfide + 2 H2O. The enzyme catalyses 1-chloro-2,4-dinitrobenzene + glutathione = 2,4-dinitrophenyl-S-glutathione + chloride + H(+). It carries out the reaction RX + glutathione = an S-substituted glutathione + a halide anion + H(+). Component of the glutathione system which performs several activities such as glutathione-dependent oxidoreductase, glutathione peroxidase and glutathione S-transferase (GST) activity. The disulfide bond functions as an electron carrier in the glutathione-dependent synthesis of deoxyribonucleotides by the enzyme ribonucleotide reductase. In addition, it is also involved in reducing cytosolic protein- and non-protein-disulfides in a coupled system with glutathione reductase. Required for resistance to reactive oxygen species (ROS) by directly reducing hydroperoxides and for the detoxification of ROS-mediated damage. GRX1 is less active as an oxidoreductase than GRX2. The protein is Glutaredoxin-1 (GRX1) of Saccharomyces cerevisiae (strain ATCC 204508 / S288c) (Baker's yeast).